A 218-amino-acid polypeptide reads, in one-letter code: UPF0598 protein C8orf82 homolog (218 aa).

It belongs to the UPF0598 family.

This Bos taurus (Bovine) protein is UPF0598 protein C8orf82 homolog.